The primary structure comprises 112 residues: Putative pterin-4-alpha-carbinolamine dehydratase (112 aa).

The protein belongs to the pterin-4-alpha-carbinolamine dehydratase family.

The catalysed reaction is (4aS,6R)-4a-hydroxy-L-erythro-5,6,7,8-tetrahydrobiopterin = (6R)-L-erythro-6,7-dihydrobiopterin + H2O. The polypeptide is Putative pterin-4-alpha-carbinolamine dehydratase (Dechloromonas aromatica (strain RCB)).